We begin with the raw amino-acid sequence, 252 residues long: Serine/threonine phosphatase stp (252 aa).

The segment covering 1–18 has biased composition (basic and acidic residues); it reads MHAEFRTDRGRIRHHNED. Positions 1–23 are disordered; sequence MHAEFRTDRGRIRHHNEDNGGVF. Positions 2 to 242 constitute a PPM-type phosphatase domain; sequence HAEFRTDRGR…DNITVLLVER (241 aa). Mn(2+) contacts are provided by D36, G37, D194, and D233.

Belongs to the PP2C family. The cofactor is Mn(2+).

The protein localises to the cytoplasm. It localises to the membrane. The catalysed reaction is O-phospho-L-seryl-[protein] + H2O = L-seryl-[protein] + phosphate. The enzyme catalyses O-phospho-L-threonyl-[protein] + H2O = L-threonyl-[protein] + phosphate. Activity not affected by inhibitors of phosphatases of the PPP family such as okadaic acid and cypermethrin, or by inhibitors of phosphatases of the PTP family such as sodium orthovanadate. Its function is as follows. Protein phosphatase that dephosphorylates EF-Tu. This chain is Serine/threonine phosphatase stp (stp), found in Listeria monocytogenes serovar 1/2a (strain ATCC BAA-679 / EGD-e).